Here is a 252-residue protein sequence, read N- to C-terminus: Chitooligosaccharide deacetylase (252 aa).

The Mg(2+) site is built by His-61 and His-125.

It belongs to the YdjC deacetylase family. ChbG subfamily. Homodimer. It depends on Mg(2+) as a cofactor.

The protein localises to the cytoplasm. It catalyses the reaction N,N'-diacetylchitobiose + H2O = N-acetyl-beta-D-glucosaminyl-(1-&gt;4)-D-glucosamine + acetate. The catalysed reaction is diacetylchitobiose-6'-phosphate + H2O = N'-monoacetylchitobiose-6'-phosphate + acetate. It participates in glycan degradation; chitin degradation. Its function is as follows. Involved in the degradation of chitin. ChbG is essential for growth on the acetylated chitooligosaccharides chitobiose and chitotriose but is dispensable for growth on cellobiose and chitosan dimer, the deacetylated form of chitobiose. Deacetylation of chitobiose-6-P and chitotriose-6-P is necessary for both the activation of the chb promoter by the regulatory protein ChbR and the hydrolysis of phosphorylated beta-glucosides by the phospho-beta-glucosidase ChbF. Catalyzes the removal of only one acetyl group from chitobiose-6-P to yield monoacetylchitobiose-6-P, the inducer of ChbR and the substrate of ChbF. This is Chitooligosaccharide deacetylase from Salmonella heidelberg (strain SL476).